The primary structure comprises 493 residues: F(420)H(2) dehydrogenase subunit N (493 aa).

A run of 14 helical transmembrane segments spans residues 7-27, 34-54, 78-98, 107-127, 130-150, 165-185, 205-225, 244-264, 273-293, 310-330, 333-353, 381-401, 404-424, and 454-474; these read LAPE…GVFL, ILGY…VKSF, LSQF…IASI, TEEF…VASA, LILL…LAGF, FVIG…VYGA, PIGI…MALV, ALLA…VFII, WQFM…VVAV, AGYI…GGIM, LAHA…VWMI, ALCM…AGFM, FVLF…IAIL, and IPFP…VMGL.

Belongs to the complex I subunit 2 family. In terms of assembly, the FPO complex is composed of at least 13 different subunits. FpoA, FpoH, FpoJ, FpoK, FpoL, FpoM and FpoN proteins constitute the membrane sector of the complex.

The protein localises to the cell membrane. The enzyme catalyses methanophenazine + reduced coenzyme F420-(gamma-L-Glu)(n) = dihydromethanophenazine + oxidized coenzyme F420-(gamma-L-Glu)(n) + H(+). In terms of biological role, component of the F(420)H(2) dehydrogenase (FPO complex) which is part of the energy-conserving F(420)H(2):heterodisulfide oxidoreductase system. The membrane-bound electron transfer system of the complex plays an important role in the metabolism of methylotrophic methanogens when the organisms grow on methanol or methylamines. Catalyzes the oxidation of methanophenazine to dihydromethanophenazine. It shuttles electrons from F(420)H(2), via FAD and iron-sulfur (Fe-S) centers, to methanophenazine (an electron carrier in the membrane). It couples the redox reaction to proton translocation (for every two electrons transferred, two hydrogen ions are translocated across the cytoplasmic membrane), and thus conserves the redox energy in a proton gradient. It also catalyzes the oxidation of F(420)H(2) with quinones such as 2,3-dimethyl-1,4-naphthoquinone, 2-methyl-1,4-naphthoquinone and tetramethyl-p-benzoquinone. This Methanosarcina mazei (strain ATCC BAA-159 / DSM 3647 / Goe1 / Go1 / JCM 11833 / OCM 88) (Methanosarcina frisia) protein is F(420)H(2) dehydrogenase subunit N (fpoN).